Reading from the N-terminus, the 375-residue chain is MSACVPTVSSPLPLQDPMSKLWRRGSTSGAMEAPEPGETLELSLAGAHGHGVHKKKHKKHKKKHKKKHHQEEEAGPTLQTPAKPQLKLKIKLGGQVLGTKSVPTFTVIPEGPRSPSPLMVVDNEEEPMEGVPLEQYRAWLDEDSNLSPSPLRDLPGDLEGQEEEEEQRWLDALEKGELDDNGDLKKEINERLLTARQRALLQKARSQPSPTLPLPVGGGCPAPALTEEMLLKREERARKRRLQAARRAEEHKNQTIERLTKTAAPSGRGGRGAARGERRGGRAAAPAPAPMVRYCSGAQGSTLSFPPGVPTPTAVAQRPAPSGPAPRCSVPGCPHPRRYACSRTGQALCSLQCYRINLQLRLGGPEGPGSPLLAT.

The segment at 1 to 84 (MSACVPTVSS…GPTLQTPAKP (84 aa)) is disordered. The span at 50-68 (HGVHKKKHKKHKKKHKKKH) shows a compositional bias: basic residues. Phosphoserine occurs at positions 114, 116, 144, 147, and 149. Disordered regions lie at residues 143 to 165 (DSNL…EEEE), 201 to 220 (LQKA…GGGC), 262 to 287 (TAAP…AAPA), and 312 to 331 (PTAV…CSVP). Positions 230–262 (LLKREERARKRRLQAARRAEEHKNQTIERLTKT) form a coiled coil. The HIT-type zinc-finger motif lies at 324 to 355 (PAPRCSVPGCPHPRRYACSRTGQALCSLQCYR).

In terms of assembly, component of the chromatin remodeling INO80 complex; specifically part of a complex module associated with the helicase ATP-binding and the helicase C-terminal domain of INO80. Interacts with RP9. In terms of tissue distribution, expressed strongly in the testis and moderately in the kidney, skeletal muscle, liver and lung.

The protein localises to the nucleus. The protein resides in the nucleolus. Functionally, proposed core component of the chromatin remodeling INO80 complex which is involved in transcriptional regulation, DNA replication and probably DNA repair. The chain is INO80 complex subunit B (Ino80b) from Mus musculus (Mouse).